A 34-amino-acid chain; its full sequence is TGPQTTCQASTCEAGCKQIGKSMKSCQGDTCECA.

3 disulfide bridges follow: C7–C26, C12–C31, and C16–C33.

As to expression, expressed by the venom gland.

The protein resides in the secreted. Its function is as follows. Reversibly blocks Shaker B potassium channels. This chain is Potassium channel toxin alpha-KTx 18.2, found in Tityus discrepans (Venezuelan scorpion).